We begin with the raw amino-acid sequence, 331 residues long: GATA transcription factor 12 (331 aa).

Disordered stretches follow at residues 30–49 and 105–138; these read ENDV…SSNF and SGFK…SVPA. A compositionally biased stretch (low complexity) spans 34-47; that stretch reads VADSTTTTTITDSS. Positions 116 to 134 are enriched in polar residues; sequence DTGSPENPNSSSPIFTTDV. Positions 139–146 match the Nuclear localization signal motif; that stretch reads KARSKRSR. The disordered stretch occupies residues 174-218; the sequence is SSQQHLSPPTSPPLLMAPLGKKQAVDGGHRRKKDVSSPESGGAEE. The GATA-type zinc finger occupies 215 to 269; the sequence is GAEERRCLHCATDKTPQWRTGPMGPKTLCNACGVRYKSGRLVPEYRPAASPTFVL.

The protein belongs to the type IV zinc-finger family. Class A subfamily. In terms of tissue distribution, expressed in the vascular cylinder of roots. Expressed in the differentiation zone of the root stele.

The protein localises to the nucleus. In terms of biological role, transcriptional activator that specifically binds 5'-GATA-3' or 5'-GAT-3' motifs within gene promoters. May be involved in the regulation of some light-responsive genes. Transcription activator involved in xylem formation. Functions upstream of NAC030/VND7, a master switch of xylem vessel differentiation. The chain is GATA transcription factor 12 from Arabidopsis thaliana (Mouse-ear cress).